Here is a 254-residue protein sequence, read N- to C-terminus: NAD kinase (254 aa).

Residue Asp-44 is the Proton acceptor of the active site. Residues 44–45 (DG), 114–115 (NE), Asp-144, Ala-152, 155–160 (TAYNYS), and Ala-179 contribute to the NAD(+) site.

The protein belongs to the NAD kinase family. It depends on a divalent metal cation as a cofactor.

It localises to the cytoplasm. The catalysed reaction is NAD(+) + ATP = ADP + NADP(+) + H(+). Involved in the regulation of the intracellular balance of NAD and NADP, and is a key enzyme in the biosynthesis of NADP. Catalyzes specifically the phosphorylation on 2'-hydroxyl of the adenosine moiety of NAD to yield NADP. The protein is NAD kinase of Cereibacter sphaeroides (strain ATCC 17025 / ATH 2.4.3) (Rhodobacter sphaeroides).